The chain runs to 382 residues: MSSNLLRDAHRIVVKVGSSLVTNEGRGLDEAAIQEWSRQLAALVRGDESHGGQRREVIMVSSGAVAEGMKRLGWAARPKEIHELQAAAAVGQMGLIQMYESKLREQGMGSAQVLLTHADLADRERYLNARNTLLTLLELGIVPVINENDTVVNDEIKFGDNDTLGALVANLIEADALVILTDQRGLYSADPRSNPDARFIDVANAGDPALEEMAGGAGSSIGKGGMITKILAAKRAAGSGASTVIAWGREQDVLVRLAAGESIGTLLVAQTHKNQARKQWIADHLQLRGSVSVDAGAVAKLRDEGKSLLPIGMVNVDGEFARGDVIAVRDALGIEVARGLANYASAEARLLCRKSSVEIERLLGYSAGPEMVHRDNMVIAGH.

Lys-15 provides a ligand contact to ATP. Residues Ser-62, Asp-149, and Asn-161 each contribute to the substrate site. 181 to 182 lines the ATP pocket; sequence TD. The region spanning 288-366 is the PUA domain; that stretch reads RGSVSVDAGA…VEIERLLGYS (79 aa).

This sequence belongs to the glutamate 5-kinase family.

It is found in the cytoplasm. It catalyses the reaction L-glutamate + ATP = L-glutamyl 5-phosphate + ADP. It participates in amino-acid biosynthesis; L-proline biosynthesis; L-glutamate 5-semialdehyde from L-glutamate: step 1/2. In terms of biological role, catalyzes the transfer of a phosphate group to glutamate to form L-glutamate 5-phosphate. This Delftia acidovorans (strain DSM 14801 / SPH-1) protein is Glutamate 5-kinase.